We begin with the raw amino-acid sequence, 304 residues long: Acetyl-coenzyme A carboxylase carboxyl transferase subunit beta (304 aa).

The CoA carboxyltransferase N-terminal domain maps to 25-294 (LWIKCPETGE…KAVKRDTATE (270 aa)).

It belongs to the AccD/PCCB family. Acetyl-CoA carboxylase is a heterohexamer composed of biotin carboxyl carrier protein (AccB), biotin carboxylase (AccC) and two subunits each of ACCase subunit alpha (AccA) and ACCase subunit beta (AccD).

It is found in the cytoplasm. It carries out the reaction N(6)-carboxybiotinyl-L-lysyl-[protein] + acetyl-CoA = N(6)-biotinyl-L-lysyl-[protein] + malonyl-CoA. The protein operates within lipid metabolism; malonyl-CoA biosynthesis; malonyl-CoA from acetyl-CoA: step 1/1. Functionally, component of the acetyl coenzyme A carboxylase (ACC) complex. Biotin carboxylase (BC) catalyzes the carboxylation of biotin on its carrier protein (BCCP) and then the CO(2) group is transferred by the transcarboxylase to acetyl-CoA to form malonyl-CoA. This chain is Acetyl-coenzyme A carboxylase carboxyl transferase subunit beta, found in Rhizobium meliloti (strain 1021) (Ensifer meliloti).